Here is a 533-residue protein sequence, read N- to C-terminus: tRNA(Ile)-lysidine synthase (533 aa).

27 to 32 (SGGSDS) is a binding site for ATP.

This sequence belongs to the tRNA(Ile)-lysidine synthase family.

It localises to the cytoplasm. The enzyme catalyses cytidine(34) in tRNA(Ile2) + L-lysine + ATP = lysidine(34) in tRNA(Ile2) + AMP + diphosphate + H(+). Its function is as follows. Ligates lysine onto the cytidine present at position 34 of the AUA codon-specific tRNA(Ile) that contains the anticodon CAU, in an ATP-dependent manner. Cytidine is converted to lysidine, thus changing the amino acid specificity of the tRNA from methionine to isoleucine. The chain is tRNA(Ile)-lysidine synthase from Rickettsia peacockii (strain Rustic).